Here is an 84-residue protein sequence, read N- to C-terminus: Small ribosomal subunit protein uS17 (84 aa).

The protein belongs to the universal ribosomal protein uS17 family. As to quaternary structure, part of the 30S ribosomal subunit.

Its function is as follows. One of the primary rRNA binding proteins, it binds specifically to the 5'-end of 16S ribosomal RNA. The protein is Small ribosomal subunit protein uS17 of Photorhabdus laumondii subsp. laumondii (strain DSM 15139 / CIP 105565 / TT01) (Photorhabdus luminescens subsp. laumondii).